An 83-amino-acid polypeptide reads, in one-letter code: Large ribosomal subunit protein bL31B (83 aa).

The protein belongs to the bacterial ribosomal protein bL31 family. Type B subfamily. In terms of assembly, part of the 50S ribosomal subunit.

The sequence is that of Large ribosomal subunit protein bL31B from Bacteroides fragilis (strain ATCC 25285 / DSM 2151 / CCUG 4856 / JCM 11019 / LMG 10263 / NCTC 9343 / Onslow / VPI 2553 / EN-2).